We begin with the raw amino-acid sequence, 225 residues long: NAD(P)H-quinone oxidoreductase subunit K, chloroplastic (225 aa).

[4Fe-4S] cluster contacts are provided by Cys43, Cys44, Cys108, and Cys139.

Belongs to the complex I 20 kDa subunit family. As to quaternary structure, NDH is composed of at least 16 different subunits, 5 of which are encoded in the nucleus. [4Fe-4S] cluster is required as a cofactor.

It is found in the plastid. Its subcellular location is the chloroplast thylakoid membrane. The enzyme catalyses a plastoquinone + NADH + (n+1) H(+)(in) = a plastoquinol + NAD(+) + n H(+)(out). The catalysed reaction is a plastoquinone + NADPH + (n+1) H(+)(in) = a plastoquinol + NADP(+) + n H(+)(out). Functionally, NDH shuttles electrons from NAD(P)H:plastoquinone, via FMN and iron-sulfur (Fe-S) centers, to quinones in the photosynthetic chain and possibly in a chloroplast respiratory chain. The immediate electron acceptor for the enzyme in this species is believed to be plastoquinone. Couples the redox reaction to proton translocation, and thus conserves the redox energy in a proton gradient. The sequence is that of NAD(P)H-quinone oxidoreductase subunit K, chloroplastic from Eucalyptus globulus subsp. globulus (Tasmanian blue gum).